The chain runs to 872 residues: Trichohyalin-like protein 1 (872 aa).

One can recognise an EF-hand domain in the interval 46-81; sequence CAIHAVERNLNLLNIDSNGAISFDEFVLAIFSFLNV. Positions 117–127 are enriched in polar residues; the sequence is QWTEGTSQTQD. Disordered stretches follow at residues 117–759, 774–813, and 830–872; these read QWTE…ERGA, LQQT…DSSD, and EFLP…APKQ. 8 stretches are compositionally biased toward basic and acidic residues: residues 142–155, 164–190, 218–235, 296–307, 324–348, 365–375, 399–435, and 486–505; these read SLEE…RVDP, LPVE…KVDQ, TKGE…DILA, GKDEPSSEHVDL, AAKD…ETRD, RVERKGVRGPE, EDKK…KDSE, and SGEK…KEDD. Residues 538-570 are compositionally biased toward polar residues; sequence NSETSDLFVQGDSQSQTNPFRGSVQGSDSNNPE. 3 stretches are compositionally biased toward basic and acidic residues: residues 571 to 584, 592 to 608, and 664 to 684; these read TQKH…KRVQ, RGED…EHEG, and TKKD…KEED. 2 stretches are compositionally biased toward polar residues: residues 699 to 708 and 718 to 729; these read ENNAVSQKTC and SPQQLAGEQSLS. Residues 730–751 show a composition bias toward basic and acidic residues; that stretch reads TKEHDPSVSESGLEERMQRDQE. Polar residues-rich tracts occupy residues 774-793 and 801-812; these read LQQT…TASV and NQSSASLTNDSS. The span at 849-865 shows a compositional bias: basic and acidic residues; that stretch reads LEDKQGRPQREELEPQK.

Belongs to the S-100 family.

This Bos taurus (Bovine) protein is Trichohyalin-like protein 1 (TCHHL1).